Consider the following 222-residue polypeptide: MAASITAITVENLEYPAVVTSPVTGKSYFLGGAGERGLTIEGNFIKFTAIGVYLEDIAVASLAAKWKGKSSEELLETLDFYRDIISGPFEKLIRGSKIRELSGPEYSRKVMENCVAHLKSVGTYGDAEAEAMQKFAEAFKPVNFPPGASVFYRQSPDGILGLSFSPDTSIPEKEAALIENKAVSSAVLETMIGEHAVSPDLKRCLAARLPALLNEGAFKIGN.

3 residues coordinate substrate: Thr48, Asn113, and Thr190.

The protein belongs to the chalcone isomerase family.

It carries out the reaction a chalcone = a flavanone.. It participates in secondary metabolite biosynthesis; flavonoid biosynthesis. Its function is as follows. Catalyzes the intramolecular cyclization of bicyclic chalcones into tricyclic (S)-flavanones. Responsible for the isomerization of 4,2',4',6'-tetrahydroxychalcone (also termed chalcone) into naringenin. The chain is Chalcone--flavanone isomerase 1 (CHI1) from Medicago sativa (Alfalfa).